The following is a 194-amino-acid chain: Inosine triphosphate pyrophosphatase (194 aa).

ITP is bound at residue 10–15; sequence TTNLKK. Glu36 is a binding site for Mg(2+). Residues Lys48, 66–67, Lys83, Lys166, and 171–172 each bind ITP; these read DT and HR.

This sequence belongs to the HAM1 NTPase family. Homodimer. Mg(2+) is required as a cofactor. It depends on Mn(2+) as a cofactor.

It localises to the cytoplasm. Its subcellular location is the nucleus. It catalyses the reaction ITP + H2O = IMP + diphosphate + H(+). The enzyme catalyses dITP + H2O = dIMP + diphosphate + H(+). The catalysed reaction is XTP + H2O = XMP + diphosphate + H(+). Pyrophosphatase that hydrolyzes non-canonical purine nucleotides such as inosine triphosphate (ITP), deoxyinosine triphosphate (dITP) or xanthosine 5'-triphosphate (XTP) to their respective monophosphate derivatives. The enzyme does not distinguish between the deoxy- and ribose forms. Probably excludes non-canonical purines from RNA and DNA precursor pools, thus preventing their incorporation into RNA and DNA and avoiding chromosomal lesions. The polypeptide is Inosine triphosphate pyrophosphatase (Encephalitozoon intestinalis (strain ATCC 50506) (Microsporidian parasite)).